A 245-amino-acid polypeptide reads, in one-letter code: Peroxisome biogenesis protein 19-2 (245 aa).

Residues 17 to 106 are disordered; it reads ALDDFKDLNL…LSSKQQPTGS (90 aa). Composition is skewed to basic and acidic residues over residues 33–44 and 71–92; these read VKKEEGDKKETE and AKEDHVTEALDKLREQTRETVK. A compositionally biased stretch (polar residues) spans 96–105; the sequence is SLSSKQQPTG. Position 242 is a cysteine methyl ester (cysteine 242). Cysteine 242 carries S-farnesyl cysteine lipidation. The propeptide at 243 to 245 is removed in mature form; it reads CVM.

Belongs to the peroxin-19 family. As to quaternary structure, dimer. Interacts with PEX10 (via C-terminus). Post-translationally, may be farnesylated. Expressed in roots, leaves, flowers, siliques and stems. Highest expression in roots and leaves.

It localises to the cytoplasm. The protein resides in the peroxisome membrane. Its function is as follows. Contributes to morphology determination of peroxisomes, but not to import of peroxisomal matrix proteins. Required for proper post-translational import and stabilization of peroxisomal membrane proteins (PMPs). Acts as a cytosolic import receptor for PMPs and delivers them to the docking factor PEX3 at the peroxisomal membrane for subsequent insertion into the membrane. Acts as a chaperone in stabilizing or maintaining PMPs in the lipid bilayer. This is Peroxisome biogenesis protein 19-2 (PEX19-2) from Arabidopsis thaliana (Mouse-ear cress).